Consider the following 330-residue polypeptide: Aspartate--ammonia ligase (330 aa).

The protein belongs to the class-II aminoacyl-tRNA synthetase family. AsnA subfamily.

The protein localises to the cytoplasm. It carries out the reaction L-aspartate + NH4(+) + ATP = L-asparagine + AMP + diphosphate + H(+). The protein operates within amino-acid biosynthesis; L-asparagine biosynthesis; L-asparagine from L-aspartate (ammonia route): step 1/1. The sequence is that of Aspartate--ammonia ligase from Haemophilus ducreyi (strain 35000HP / ATCC 700724).